Reading from the N-terminus, the 1718-residue chain is PR domain zinc finger protein 2 (1718 aa).

In terms of domain architecture, SET spans 28–141 (EEVRLFPSAV…PGEELLVWYN (114 aa)). The interval 155–335 (ERASARSKRS…TSEETLEDCS (181 aa)) is disordered. Over residues 159–173 (ARSKRSSPKSRKGKK) the composition is skewed to basic residues. A compositionally biased stretch (polar residues) spans 189–202 (QLKTSEPDFTSANM). The span at 204–216 (DSAEGPKEDEEKP) shows a compositional bias: basic and acidic residues. A compositionally biased stretch (acidic residues) spans 265-297 (DLGEEEEEEEEEDEEEEEDDDDDELEDEGEEEA). Residues 294 to 316 (EEEASMPNENSVKEPEIRCDEKP) form a retinoblastoma protein binding region. Over residues 304-327 (SVKEPEIRCDEKPEDLLEEPKTTS) the composition is skewed to basic and acidic residues. Residue lysine 347 forms a Glycyl lysine isopeptide (Lys-Gly) (interchain with G-Cter in SUMO2) linkage. 2 C2H2-type zinc fingers span residues 360–382 (FPCQ…MHIH) and 390–412 (FKCK…ERRH). A disordered region spans residues 405 to 457 (RRRHERRHEAGLKRKPSQTLQPSEDLADGKASGENVASKDDSSPPSLGPDCLI). The residue at position 421 (serine 421) is a Phosphoserine. The C2H2-type 3 zinc finger occupies 483-506 (HPCKYCKKVFGTHTNMRRHQRRVH). 2 disordered regions span residues 513-550 (KGVR…EGEA) and 622-660 (EDLP…DPMV). A Phosphoserine modification is found at serine 643. Glycyl lysine isopeptide (Lys-Gly) (interchain with G-Cter in SUMO2) cross-links involve residues lysine 651, lysine 690, and lysine 692. A disordered region spans residues 729-797 (TSSRFKRRTS…GRDERETVSP (69 aa)). Over residues 738-748 (SSPPSSPQHSP) the composition is skewed to low complexity. Serine 743 carries the phosphoserine modification. Lysine 774 is covalently cross-linked (Glycyl lysine isopeptide (Lys-Gly) (interchain with G-Cter in SUMO2)). Phosphoserine occurs at positions 781, 785, and 796. Residues lysine 866 and lysine 879 each participate in a glycyl lysine isopeptide (Lys-Gly) (interchain with G-Cter in SUMO2) cross-link. Residues 903 to 1083 (VENPADGTRS…SPPPLSAISS (181 aa)) form a disordered region. The span at 951 to 969 (LQTPSLSSGQLPPLLIPTD) shows a compositional bias: low complexity. Short sequence motifs (SH3-binding) lie at residues 970-979 (PSSPPPCPPV) and 985-998 (PPPP…LPAP). The segment covering 970–997 (PSSPPPCPPVLTVATPPPPLLPTVPLPA) has biased composition (pro residues). A compositionally biased stretch (low complexity) spans 1018–1027 (SPLPILSPTV). Residues 1028–1038 (SPSPSPIPPVE) show a composition bias toward pro residues. An SH3-binding motif is present at residues 1028-1052 (SPSPSPIPPVEPLMSAASPGPPTLS). Over residues 1042-1072 (SAASPGPPTLSSSSSSSSSSSSFSSSSSSSS) the composition is skewed to low complexity. C2H2-type zinc fingers lie at residues 1134 to 1156 (FVCN…LSIH), 1162 to 1185 (FKCE…FLLH), and 1191 to 1214 (FVCS…RDLH). Glycyl lysine isopeptide (Lys-Gly) (interchain with G-Cter in SUMO2) cross-links involve residues lysine 1147 and lysine 1151. Positions 1244–1265 (HMQSLPEDPLETSKEEEELNDS) are disordered. Residues 1251–1265 (DPLETSKEEEELNDS) show a composition bias toward acidic residues. Residues lysine 1257 and lysine 1281 each participate in a glycyl lysine isopeptide (Lys-Gly) (interchain with G-Cter in SUMO2) cross-link. A C2H2-type 7; atypical zinc finger spans residues 1333–1355 (IRCTKCGKGVDNMPELHKHILAC). A C2H2-type 8; atypical zinc finger spans residues 1455-1478 (HICPYCNREFTYIGSLNKHAAFSC). Disordered stretches follow at residues 1478 to 1576 (CPKK…LRNS), 1589 to 1612 (GKKP…RSLH), and 1625 to 1652 (KSTL…VTRS). The segment covering 1486-1498 (PKKKVSHSSKKGG) has biased composition (basic residues). Over residues 1499–1511 (HSSPASSDKNSNS) the composition is skewed to low complexity. Composition is skewed to polar residues over residues 1525–1556 (QSMQ…SKQN) and 1599–1608 (HSAQLSSKTS). Residues 1635–1645 (DRFNIKSRERS) are compositionally biased toward basic and acidic residues.

Belongs to the class V-like SAM-binding methyltransferase superfamily. Binds to the retinoblastoma protein (RB). Interacts with GATA3. As to expression, highly expressed in retinoblastoma cell lines and in brain tumors. Also expressed in a number of other cell lines and in brain, heart, skeletal muscle, liver and spleen. Isoform 1 is expressed in testis at much higher level than isoform 3.

Its subcellular location is the nucleus. It carries out the reaction L-lysyl(9)-[histone H3] + 3 S-adenosyl-L-methionine = N(6),N(6),N(6)-trimethyl-L-lysyl(9)-[histone H3] + 3 S-adenosyl-L-homocysteine + 3 H(+). Its function is as follows. S-adenosyl-L-methionine-dependent histone methyltransferase that specifically methylates 'Lys-9' of histone H3. May function as a DNA-binding transcription factor. Binds to the macrophage-specific TPA-responsive element (MTE) of the HMOX1 (heme oxygenase 1) gene and may act as a transcriptional activator of this gene. The chain is PR domain zinc finger protein 2 (PRDM2) from Homo sapiens (Human).